Consider the following 105-residue polypeptide: Nitrogen fixation nifHD1 region GlnB-like protein 1 (105 aa).

This sequence belongs to the P(II) protein family.

Could be involved in the regulation of nitrogen fixation. In Methanosarcina barkeri, this protein is Nitrogen fixation nifHD1 region GlnB-like protein 1 (glnBA).